The following is a 180-amino-acid chain: Inner membrane-spanning protein YciB (180 aa).

Transmembrane regions (helical) follow at residues 4 to 24 (LLSE…GGGI), 25 to 45 (QHAT…CYVI), 52 to 72 (LSII…ISGN), 76 to 96 (IKIK…MSGI), 118 to 138 (ITLS…NEVV), and 150 to 170 (FKVF…LPLL).

It belongs to the YciB family.

Its subcellular location is the cell inner membrane. Plays a role in cell envelope biogenesis, maintenance of cell envelope integrity and membrane homeostasis. This Rickettsia massiliae (strain Mtu5) protein is Inner membrane-spanning protein YciB.